A 304-amino-acid chain; its full sequence is Quinolinate synthase (304 aa).

Iminosuccinate is bound by residues His-23 and Ser-40. Cys-85 is a [4Fe-4S] cluster binding site. Iminosuccinate contacts are provided by residues 111–113 (YVN) and Ser-128. Position 171 (Cys-171) interacts with [4Fe-4S] cluster. Iminosuccinate is bound by residues 197–199 (HPE) and Thr-214. Cys-259 contacts [4Fe-4S] cluster.

Belongs to the quinolinate synthase family. Type 2 subfamily. It depends on [4Fe-4S] cluster as a cofactor.

It localises to the cytoplasm. The catalysed reaction is iminosuccinate + dihydroxyacetone phosphate = quinolinate + phosphate + 2 H2O + H(+). The protein operates within cofactor biosynthesis; NAD(+) biosynthesis; quinolinate from iminoaspartate: step 1/1. Functionally, catalyzes the condensation of iminoaspartate with dihydroxyacetone phosphate to form quinolinate. This is Quinolinate synthase from Pelobacter propionicus (strain DSM 2379 / NBRC 103807 / OttBd1).